Here is a 212-residue protein sequence, read N- to C-terminus: Large ribosomal subunit protein uL1 (212 aa).

The protein belongs to the universal ribosomal protein uL1 family. Part of the 50S ribosomal subunit.

Binds directly to 23S rRNA. Probably involved in E site tRNA release. Functionally, protein L1 is also a translational repressor protein, it controls the translation of its operon by binding to its mRNA. The chain is Large ribosomal subunit protein uL1 from Methanosphaera stadtmanae (strain ATCC 43021 / DSM 3091 / JCM 11832 / MCB-3).